A 95-amino-acid polypeptide reads, in one-letter code: Co-chaperonin GroES (95 aa).

It belongs to the GroES chaperonin family. Heptamer of 7 subunits arranged in a ring. Interacts with the chaperonin GroEL.

Its subcellular location is the cytoplasm. Functionally, together with the chaperonin GroEL, plays an essential role in assisting protein folding. The GroEL-GroES system forms a nano-cage that allows encapsulation of the non-native substrate proteins and provides a physical environment optimized to promote and accelerate protein folding. GroES binds to the apical surface of the GroEL ring, thereby capping the opening of the GroEL channel. This is Co-chaperonin GroES from Pelodictyon phaeoclathratiforme (strain DSM 5477 / BU-1).